The chain runs to 355 residues: Guanine nucleotide-binding protein G(z) subunit alpha (355 aa).

A compositionally biased stretch (basic and acidic residues) spans 1-14; sequence MGCRQSSEEKEAAR. The segment at 1–26 is disordered; it reads MGCRQSSEEKEAARRSRRIDRHLRSE. Glycine 2 is lipidated: N-myristoyl glycine. A lipid anchor (S-palmitoyl cysteine) is attached at cysteine 3. The G-alpha domain occupies 32-355; sequence REIKLLLLGT…QNNLKYIGLC (324 aa). Positions 35–48 are G1 motif; that stretch reads KLLLLGTSNSGKST. GTP-binding positions include 40 to 47, 176 to 182, 201 to 205, 270 to 273, and alanine 327; these read GTSNSGKS, LRSRDMT, DVGGQ, and NKKD. Residues serine 47 and threonine 182 each contribute to the Mg(2+) site. Positions 174–182 are G2 motif; it reads DILRSRDMT. The G3 motif stretch occupies residues 197–206; that stretch reads FKMVDVGGQR. Residues 266–273 form a G4 motif region; that stretch reads ILFLNKKD. Residues 325–330 form a G5 motif region; the sequence is TCATDT.

It belongs to the G-alpha family. G(i/o/t/z) subfamily. As to quaternary structure, G-proteins are composed of 3 units; alpha, beta and gamma. The alpha chain contains the guanine nucleotide binding site. Interacts with ADGRB2.

The protein resides in the membrane. Guanine nucleotide-binding proteins (G proteins) are involved as modulators or transducers in various transmembrane signaling systems. The polypeptide is Guanine nucleotide-binding protein G(z) subunit alpha (Gnaz) (Mus musculus (Mouse)).